A 104-amino-acid polypeptide reads, in one-letter code: NADH-quinone oxidoreductase subunit K (104 aa).

The next 3 membrane-spanning stretches (helical) occupy residues 4–24 (VPAS…LFGA), 31–51 (VIVL…LVAF), and 67–87 (LFTM…LIAL).

It belongs to the complex I subunit 4L family. In terms of assembly, NDH-1 is composed of 14 different subunits. Subunits NuoA, H, J, K, L, M, N constitute the membrane sector of the complex.

It is found in the cell membrane. The catalysed reaction is a quinone + NADH + 5 H(+)(in) = a quinol + NAD(+) + 4 H(+)(out). NDH-1 shuttles electrons from NADH, via FMN and iron-sulfur (Fe-S) centers, to quinones in the respiratory chain. The immediate electron acceptor for the enzyme in this species is believed to be a menaquinone. Couples the redox reaction to proton translocation (for every two electrons transferred, four hydrogen ions are translocated across the cytoplasmic membrane), and thus conserves the redox energy in a proton gradient. In Bacillus cereus (strain AH187), this protein is NADH-quinone oxidoreductase subunit K.